The chain runs to 208 residues: MSSTKRARNQVRLSRALGLPLTPKAAKYFEKRPYPPGEHGRARRRTESDYAVRLKEKQRLRAQYGIREAQLRRAFDEARREAGLTGEALVELLEMRLDALVLRSGFARTIAQARQAVVHRHVLVDGKIVDRPSFRVKPGQVIQVKPRSQARTPFQVAAAGAHRDVLAQVPEYLDVSLEKLRSELVRRPKRAEVPVTADVQLIVEWYAR.

The tract at residues 28–48 (YFEKRPYPPGEHGRARRRTES) is disordered. The region spanning 95–159 (MRLDALVLRS…ARTPFQVAAA (65 aa)) is the S4 RNA-binding domain.

It belongs to the universal ribosomal protein uS4 family. Part of the 30S ribosomal subunit. Contacts protein S5. The interaction surface between S4 and S5 is involved in control of translational fidelity.

Its function is as follows. One of the primary rRNA binding proteins, it binds directly to 16S rRNA where it nucleates assembly of the body of the 30S subunit. Functionally, with S5 and S12 plays an important role in translational accuracy. The polypeptide is Small ribosomal subunit protein uS4 (Beutenbergia cavernae (strain ATCC BAA-8 / DSM 12333 / CCUG 43141 / JCM 11478 / NBRC 16432 / NCIMB 13614 / HKI 0122)).